The primary structure comprises 963 residues: Isoleucine--tRNA ligase (963 aa).

Residues 66–76 (PYANGDIHIGH) carry the 'HIGH' region motif. Position 596 (Glu-596) interacts with L-isoleucyl-5'-AMP. A 'KMSKS' region motif is present at residues 637 to 641 (KMSKS). Lys-640 lines the ATP pocket. Zn(2+)-binding residues include Cys-926, Cys-929, Cys-946, and Cys-949.

It belongs to the class-I aminoacyl-tRNA synthetase family. IleS type 1 subfamily. Monomer. Zn(2+) serves as cofactor.

It is found in the cytoplasm. It catalyses the reaction tRNA(Ile) + L-isoleucine + ATP = L-isoleucyl-tRNA(Ile) + AMP + diphosphate. In terms of biological role, catalyzes the attachment of isoleucine to tRNA(Ile). As IleRS can inadvertently accommodate and process structurally similar amino acids such as valine, to avoid such errors it has two additional distinct tRNA(Ile)-dependent editing activities. One activity is designated as 'pretransfer' editing and involves the hydrolysis of activated Val-AMP. The other activity is designated 'posttransfer' editing and involves deacylation of mischarged Val-tRNA(Ile). The sequence is that of Isoleucine--tRNA ligase from Cupriavidus pinatubonensis (strain JMP 134 / LMG 1197) (Cupriavidus necator (strain JMP 134)).